The following is a 428-amino-acid chain: Putative oxidoreductase YteT (428 aa).

The N-terminal stretch at 1–23 (MKNIVFCGLSSRAFSMFIKPLME) is a signal peptide.

Belongs to the Gfo/Idh/MocA family.

Functionally, may play a role in the degradation of type I rhamnogalacturonan derived from plant cell walls. The polypeptide is Putative oxidoreductase YteT (yteT) (Bacillus subtilis (strain 168)).